We begin with the raw amino-acid sequence, 539 residues long: ATP synthase subunit beta (539 aa).

The tract at residues 1–44 (MAKTPAEKPATAAKKPAAPKAAAAPKAAAAKAPAAAKAPAAKKP) is disordered. 212–219 (GGAGVGKT) serves as a coordination point for ATP.

The protein belongs to the ATPase alpha/beta chains family. In terms of assembly, F-type ATPases have 2 components, CF(1) - the catalytic core - and CF(0) - the membrane proton channel. CF(1) has five subunits: alpha(3), beta(3), gamma(1), delta(1), epsilon(1). CF(0) has three main subunits: a(1), b(2) and c(9-12). The alpha and beta chains form an alternating ring which encloses part of the gamma chain. CF(1) is attached to CF(0) by a central stalk formed by the gamma and epsilon chains, while a peripheral stalk is formed by the delta and b chains.

The protein localises to the cell inner membrane. It carries out the reaction ATP + H2O + 4 H(+)(in) = ADP + phosphate + 5 H(+)(out). In terms of biological role, produces ATP from ADP in the presence of a proton gradient across the membrane. The catalytic sites are hosted primarily by the beta subunits. The protein is ATP synthase subunit beta of Caulobacter vibrioides (strain ATCC 19089 / CIP 103742 / CB 15) (Caulobacter crescentus).